Consider the following 585-residue polypeptide: Aspartate--tRNA ligase (585 aa).

Glutamate 169 provides a ligand contact to L-aspartate. The interval 193–196 is aspartate; sequence QLFK. An L-aspartate-binding site is contributed by arginine 215. ATP is bound by residues 215–217 and glutamine 224; that span reads RDE. Histidine 443 serves as a coordination point for L-aspartate. Residue glutamate 478 participates in ATP binding. Arginine 485 is an L-aspartate binding site. ATP is bound at residue 530 to 533; it reads GLDR.

It belongs to the class-II aminoacyl-tRNA synthetase family. Type 1 subfamily. In terms of assembly, homodimer.

Its subcellular location is the cytoplasm. It carries out the reaction tRNA(Asp) + L-aspartate + ATP = L-aspartyl-tRNA(Asp) + AMP + diphosphate. Functionally, catalyzes the attachment of L-aspartate to tRNA(Asp) in a two-step reaction: L-aspartate is first activated by ATP to form Asp-AMP and then transferred to the acceptor end of tRNA(Asp). The chain is Aspartate--tRNA ligase from Pseudothermotoga lettingae (strain ATCC BAA-301 / DSM 14385 / NBRC 107922 / TMO) (Thermotoga lettingae).